The sequence spans 901 residues: MSILTRIFGSRNERVLRKLKKQVVKINKMEPAFEALSDDELKAKTQEFRDRLSGGETLQQILPEAFATVREASKRVLGMRHFDVQLIGGMVLTNRCIAEMRTGEGKTLTATLPCYLIALEGKGVHVVTVNDYLARRDAETNRPLFEFLGMSVGVNIPGLSPEEKREAYAADITYATNSELGFDYLRDNLAHSKEERFQRTLGYALVDEVDSILIDEARTPLIISGQAEKSSELYIAVNKLIPSLIKQEKEDTEEYQGEGDFTLDLKSKQAHLTERGQEKVEDWLIAQGLMPEGDSLYSPSRIVLLHHVMAALRAHTLFEKDVDYIVKDGEIVIVDEHTGRTMAGRRWSDGLHQAIEAKEGVDVKSENQTVASISYQNYFRLYERLAGMTGTADTEAFEFQQIYGLETVVIPTNRPMIRDDRTDVMFENEQYKFNAIIEDIKDCVERQQPVLVGTISVEKSEELSKALDKAGIKHNVLNAKFHQQEAEIVAEAGFPSAVTIATNMAGRGTDIILGGNWKAQAAKLENPTQEQIEALKAEWEKNHEIVMKAGGLHIIGTERHESRRIDNQLRGRSGRQGDPGSSRFYLSLEDGLMRIYLNEGKRNLMRKAFTVAGEAMESKMLAKVIASAQAKVEAFHFDGRKNLLEYDDVANDQRHAIYEQRNYLLDNDDISETINAIRHDVFNGVIDQYIPPQSLEEQWDIKGLEERLSQEFGMELPISNWLEEDNNLHEESLRERIVEIAEKEYKEKEALVGEDAMHHFEKGVMLQTLDELWKEHLASMDYLRQGIHLRGYAQKDPKQEYKKESFRMFTEMLDSLKHHVIMTLTRVRVRTQEEMEEAERARQEMATRINQNNLPVDENSQTTQNSETEDYSDRRIGRNEPCPCGSGKKYKHCHGSRVARQ.

Residues Gln85, 103 to 107 (GEGKT), and Asp510 contribute to the ATP site. Positions 836 to 845 (EEAERARQEM) are enriched in basic and acidic residues. Positions 836 to 901 (EEAERARQEM…HCHGSRVARQ (66 aa)) are disordered. Over residues 849–866 (INQNNLPVDENSQTTQNS) the composition is skewed to polar residues. Positions 882, 884, 893, and 894 each coordinate Zn(2+). The span at 888–901 (KKYKHCHGSRVARQ) shows a compositional bias: basic residues.

This sequence belongs to the SecA family. As to quaternary structure, monomer and homodimer. Part of the essential Sec protein translocation apparatus which comprises SecA, SecYEG and auxiliary proteins SecDF-YajC and YidC. The cofactor is Zn(2+).

It localises to the cell inner membrane. Its subcellular location is the cytoplasm. The enzyme catalyses ATP + H2O + cellular proteinSide 1 = ADP + phosphate + cellular proteinSide 2.. Its function is as follows. Part of the Sec protein translocase complex. Interacts with the SecYEG preprotein conducting channel. Has a central role in coupling the hydrolysis of ATP to the transfer of proteins into and across the cell membrane, serving both as a receptor for the preprotein-SecB complex and as an ATP-driven molecular motor driving the stepwise translocation of polypeptide chains across the membrane. The sequence is that of Protein translocase subunit SecA from Haemophilus influenzae (strain PittEE).